A 101-amino-acid polypeptide reads, in one-letter code: Large ribosomal subunit protein uL24 (101 aa).

This sequence belongs to the universal ribosomal protein uL24 family. Part of the 50S ribosomal subunit.

In terms of biological role, one of two assembly initiator proteins, it binds directly to the 5'-end of the 23S rRNA, where it nucleates assembly of the 50S subunit. Its function is as follows. One of the proteins that surrounds the polypeptide exit tunnel on the outside of the subunit. The protein is Large ribosomal subunit protein uL24 of Borreliella burgdorferi (strain ATCC 35210 / DSM 4680 / CIP 102532 / B31) (Borrelia burgdorferi).